We begin with the raw amino-acid sequence, 1375 residues long: DNA-directed RNA polymerase subunit beta (1375 aa).

Belongs to the RNA polymerase beta chain family. The RNAP catalytic core consists of 2 alpha, 1 beta, 1 beta' and 1 omega subunit. When a sigma factor is associated with the core the holoenzyme is formed, which can initiate transcription.

The catalysed reaction is RNA(n) + a ribonucleoside 5'-triphosphate = RNA(n+1) + diphosphate. Its function is as follows. DNA-dependent RNA polymerase catalyzes the transcription of DNA into RNA using the four ribonucleoside triphosphates as substrates. This is DNA-directed RNA polymerase subunit beta from Malacoplasma penetrans (strain HF-2) (Mycoplasma penetrans).